Reading from the N-terminus, the 248-residue chain is UPF0736 protein BCE_1296 (248 aa).

This sequence belongs to the UPF0736 family.

This is UPF0736 protein BCE_1296 from Bacillus cereus (strain ATCC 10987 / NRS 248).